Here is a 100-residue protein sequence, read N- to C-terminus: Nucleoid-associated protein Cagg_3200 (100 aa).

Belongs to the YbaB/EbfC family. In terms of assembly, homodimer.

It localises to the cytoplasm. Its subcellular location is the nucleoid. In terms of biological role, binds to DNA and alters its conformation. May be involved in regulation of gene expression, nucleoid organization and DNA protection. This chain is Nucleoid-associated protein Cagg_3200, found in Chloroflexus aggregans (strain MD-66 / DSM 9485).